We begin with the raw amino-acid sequence, 449 residues long: GPI mannosyltransferase 2 (449 aa).

Residues 1–7 are Cytoplasmic-facing; it reads MTEKVTK. The chain crosses the membrane as a helical span at residues 8-28; the sequence is LALASRLIVLLVQLVANGALP. Over 29 to 82 the chain is Lumenal; that stretch reads EHKPDVFRMPVSSDQNASWIDKVIKRCLGGLRHWDGEYFLHIAENLYSYENTLA. N-linked (GlcNAc...) asparagine glycosylation is present at Asn-44. Residues 83 to 103 form a helical membrane-spanning segment; sequence FYPLYPVVVRHVGQAVEAIGI. Over 104–109 the chain is Cytoplasmic; it reads SLSQES. The helical transmembrane segment at 110-130 threads the bilayer; it reads ILLVVAVALNFWLFCESANLL. Topologically, residues 131–148 are lumenal; that stretch reads FQLTQVLFNDLNKSWNAA. N-linked (GlcNAc...) asparagine glycosylation occurs at Asn-142. Residues 149–169 traverse the membrane as a helical segment; that stretch reads LIYCFNPATIFFTAAYSETFF. Topologically, residues 170–196 are cytoplasmic; it reads AYSSLHLMLECSKPTGSFRYLRLGTAL. Residues 197–217 traverse the membrane as a helical segment; it reads AACLLCRSNGLITLGYPLYFF. The Lumenal portion of the chain corresponds to 218 to 235; that stretch reads GRQLLLKNKEPNTCMQLT. A helical membrane pass occupies residues 236–256; sequence QMTLTILGAIGILHTYYFYIY. At 257 to 368 the chain is on the cytoplasmic side; sequence RLYCLPNTRP…GFKELIRDHT (112 aa). Residues 369–389 traverse the membrane as a helical segment; the sequence is TFPFVLHAAILTLVCTVYVHI. Over 390-423 the chain is Lumenal; the sequence is QVSTRLLASATPVFYWFAADHMPKTLAQLKLRSK. The helical transmembrane segment at 424 to 444 threads the bilayer; it reads AGALFVWCTTYSLVGTVLFSN. Residues 445 to 449 are Cytoplasmic-facing; the sequence is NYPWT.

The protein belongs to the PIGV family.

The protein resides in the endoplasmic reticulum membrane. It functions in the pathway glycolipid biosynthesis; glycosylphosphatidylinositol-anchor biosynthesis. Mannosyltransferase involved in glycosylphosphatidylinositol-anchor biosynthesis. Transfers the second mannose to the glycosylphosphatidylinositol during GPI precursor assembly. Required for the GPI-mediated endoplasmic reticulum exit and proper targeting to the cell surface of chp. Required for GPI-mediated membrane attachment of chp, qsm and Cont. Essential for microvillar stability in the rhabdomere. This Drosophila melanogaster (Fruit fly) protein is GPI mannosyltransferase 2.